We begin with the raw amino-acid sequence, 462 residues long: ATP synthase subunit beta 1 (462 aa).

Residue 152 to 159 participates in ATP binding; that stretch reads GGAGVGKT.

The protein belongs to the ATPase alpha/beta chains family. As to quaternary structure, F-type ATPases have 2 components, CF(1) - the catalytic core - and CF(0) - the membrane proton channel. CF(1) has five subunits: alpha(3), beta(3), gamma(1), delta(1), epsilon(1). CF(0) has four main subunits: a(1), b(1), b'(1) and c(9-12).

It localises to the cell inner membrane. The catalysed reaction is ATP + H2O + 4 H(+)(in) = ADP + phosphate + 5 H(+)(out). Functionally, produces ATP from ADP in the presence of a proton gradient across the membrane. The catalytic sites are hosted primarily by the beta subunits. In Dinoroseobacter shibae (strain DSM 16493 / NCIMB 14021 / DFL 12), this protein is ATP synthase subunit beta 1.